Consider the following 161-residue polypeptide: C-type lectin lectoxin-Lio3 (161 aa).

The N-terminal stretch at 1–23 (MRRFIFMSLGLLVLAFSLSGIGA) is a signal peptide. Disulfide bonds link Cys-27–Cys-38, Cys-55–Cys-154, and Cys-129–Cys-146. The region spanning 34 to 155 (HNISCYKLFT…CGLLHYFICQ (122 aa)) is the C-type lectin domain. A glycan (N-linked (GlcNAc...) asparagine) is linked at Asn-35. Residues 117 to 119 (KGE) carry the Mannose-binding motif. Positions 127, 142, and 143 each coordinate Ca(2+).

Belongs to the true venom lectin family. In terms of tissue distribution, expressed by the venom gland.

The protein resides in the secreted. In terms of biological role, mannose-binding lectin which recognizes specific carbohydrate structures and agglutinates a variety of animal cells by binding to cell-surface glycoproteins and glycolipids. May be a calcium-dependent lectin. In Erythrolamprus poecilogyrus (Water snake), this protein is C-type lectin lectoxin-Lio3.